The primary structure comprises 205 residues: Cytochrome c biogenesis ATP-binding export protein CcmA (205 aa).

An ABC transporter domain is found at 2-204 (LEVSNLTAIR…SPKLRKIKLG (203 aa)). 34-41 (GRNGTGKT) provides a ligand contact to ATP.

The protein belongs to the ABC transporter superfamily. CcmA exporter (TC 3.A.1.107) family. As to quaternary structure, the complex is composed of two ATP-binding proteins (CcmA) and two transmembrane proteins (CcmB).

Its subcellular location is the cell inner membrane. It catalyses the reaction heme b(in) + ATP + H2O = heme b(out) + ADP + phosphate + H(+). Functionally, part of the ABC transporter complex CcmAB involved in the biogenesis of c-type cytochromes; once thought to export heme, this seems not to be the case, but its exact role is uncertain. Responsible for energy coupling to the transport system. This is Cytochrome c biogenesis ATP-binding export protein CcmA from Vibrio vulnificus (strain CMCP6).